Reading from the N-terminus, the 220-residue chain is uncharacterized protein (220 aa).

This is an uncharacterized protein from Schizosaccharomyces pombe (strain 972 / ATCC 24843) (Fission yeast).